Reading from the N-terminus, the 341-residue chain is HTH-type transcriptional repressor PurR (341 aa).

The region spanning 2–56 is the HTH lacI-type domain; that stretch reads ATIKDVAKRANVSTTTVSHVINKTRFVAEETRNAVWAAIKELHYSPSAVARSLKV. The H-T-H motif DNA-binding region spans 4 to 23; that stretch reads IKDVAKRANVSTTTVSHVIN. The DNA-binding element occupies 48–56; sequence SAVARSLKV. Residues Tyr-73, Arg-190, Thr-192, Phe-221, and Asp-275 each contribute to the hypoxanthine site.

In terms of assembly, homodimer.

Its pathway is purine metabolism; purine nucleotide biosynthesis [regulation]. In terms of biological role, is the main repressor of the genes involved in the de novo synthesis of purine nucleotides, regulating purB, purC, purEK, purF, purHD, purL, purMN and guaBA expression. PurR is allosterically activated to bind its cognate DNA by binding the purine corepressors, hypoxanthine or guanine, thereby effecting transcription repression. This chain is HTH-type transcriptional repressor PurR, found in Salmonella typhimurium (strain LT2 / SGSC1412 / ATCC 700720).